The following is a 239-amino-acid chain: Ribosomal RNA small subunit methyltransferase G (239 aa).

S-adenosyl-L-methionine is bound by residues G79, F84, 130–131 (AE), and R149.

Belongs to the methyltransferase superfamily. RNA methyltransferase RsmG family.

The protein localises to the cytoplasm. Its function is as follows. Specifically methylates the N7 position of a guanine in 16S rRNA. In Lactobacillus johnsonii (strain CNCM I-12250 / La1 / NCC 533), this protein is Ribosomal RNA small subunit methyltransferase G.